Consider the following 467-residue polypeptide: ATP synthase subunit beta, chloroplastic (467 aa).

Residue 149–156 (GGAGVGKT) participates in ATP binding.

Belongs to the ATPase alpha/beta chains family. As to quaternary structure, F-type ATPases have 2 components, CF(1) - the catalytic core - and CF(0) - the membrane proton channel. CF(1) has five subunits: alpha(3), beta(3), gamma(1), delta(1), epsilon(1). CF(0) has four main subunits: a(1), b(1), b'(1) and c(9-12).

It localises to the plastid. The protein localises to the chloroplast thylakoid membrane. The enzyme catalyses ATP + H2O + 4 H(+)(in) = ADP + phosphate + 5 H(+)(out). Produces ATP from ADP in the presence of a proton gradient across the membrane. The catalytic sites are hosted primarily by the beta subunits. This chain is ATP synthase subunit beta, chloroplastic, found in Cyanidioschyzon merolae (strain NIES-3377 / 10D) (Unicellular red alga).